We begin with the raw amino-acid sequence, 431 residues long: MIDIQLLRKDIETVAARLAGRKFQLDVNTFNALEAERKQIQSGTEELQNRRNTLSKQIGALKGKGEDTSAVMAEVAGIGDELKASAARLDVLQAEISKFMLAIPNLPHESVPVGKDEEDNVELRKVGTPRAFDFEVRDHVDIGAALGLDFDVAAKITGSRFSVMKGGIARLHRALAQFMLDTHTEEHGYTECYTPYIVNADSLQGTGQLPKFEADLFAVKKGGQEGEGEALYLIPTAEVPLTNIVRDEILAADALPVRMTAHSPCFRSEAGSYGRDTRGMIRQHQFDKVEMVQVVHPEKSYEALDEMCGHAENILKKLGLPYRVITLCTGDMGFGASKTYDLEVWLPAQNTYREISSVSNCEAFQARRMQARFRNAQGKPELTHTLNGSGLAVGRTLVAVLENYQQADGSVIIPEVLHPYMGGLTRLLPQA.

An L-serine-binding site is contributed by 236-238 (TAE). An ATP-binding site is contributed by 267–269 (RSE). Residue Glu-290 coordinates L-serine. 354–357 (EISS) serves as a coordination point for ATP. Ser-389 contributes to the L-serine binding site.

This sequence belongs to the class-II aminoacyl-tRNA synthetase family. Type-1 seryl-tRNA synthetase subfamily. Homodimer. The tRNA molecule binds across the dimer.

Its subcellular location is the cytoplasm. The enzyme catalyses tRNA(Ser) + L-serine + ATP = L-seryl-tRNA(Ser) + AMP + diphosphate + H(+). The catalysed reaction is tRNA(Sec) + L-serine + ATP = L-seryl-tRNA(Sec) + AMP + diphosphate + H(+). It participates in aminoacyl-tRNA biosynthesis; selenocysteinyl-tRNA(Sec) biosynthesis; L-seryl-tRNA(Sec) from L-serine and tRNA(Sec): step 1/1. Catalyzes the attachment of serine to tRNA(Ser). Is also able to aminoacylate tRNA(Sec) with serine, to form the misacylated tRNA L-seryl-tRNA(Sec), which will be further converted into selenocysteinyl-tRNA(Sec). The sequence is that of Serine--tRNA ligase from Herminiimonas arsenicoxydans.